We begin with the raw amino-acid sequence, 186 residues long: A-type ATP synthase subunit E (186 aa).

The protein belongs to the V-ATPase E subunit family. Has multiple subunits with at least A(3), B(3), C, D, E, F, H, I and proteolipid K(x).

The protein localises to the cell membrane. Its function is as follows. Component of the A-type ATP synthase that produces ATP from ADP in the presence of a proton gradient across the membrane. This Methanocella arvoryzae (strain DSM 22066 / NBRC 105507 / MRE50) protein is A-type ATP synthase subunit E.